An 86-amino-acid chain; its full sequence is U22-theraphotoxin-Cg1a (86 aa).

An N-terminal signal peptide occupies residues 1–20 (MKVSVVLAITVLALLSVAYA). The propeptide occupies 21–51 (SEFEEKELVKEVVRTIFLGKEDAALREETDR). 3 disulfide bridges follow: C53–C67, C60–C72, and C66–C79. The residue at position 85 (F85) is a Phenylalanine amide.

The protein belongs to the neurotoxin 10 (Hwtx-1) family. 42 (Jztx-44) subfamily. As to expression, expressed by the venom gland.

It is found in the secreted. Probable ion channel inhibitor. The protein is U22-theraphotoxin-Cg1a of Chilobrachys guangxiensis (Chinese earth tiger tarantula).